The sequence spans 244 residues: Venom nerve growth factor 2 (244 aa).

The signal sequence occupies residues 1–18; it reads MSMLCYTLIIAFLIGIWA. Positions 19 to 125 are excised as a propeptide; that stretch reads APKSEDNVPL…TLNRNIRAKR (107 aa). The segment covering 47-66 has biased composition (basic and acidic residues); it reads GLKTSRNTDQRHPAPKKAED. Residues 47–69 are disordered; the sequence is GLKTSRNTDQRHPAPKKAEDQEL. Disulfide bonds link Cys-139–Cys-205 and Cys-181–Cys-233.

This sequence belongs to the NGF-beta family. Homodimer; non-covalently linked. In terms of tissue distribution, expressed by the venom gland.

It localises to the secreted. In terms of biological role, nerve growth factor is important for the development and maintenance of the sympathetic and sensory nervous systems. It stimulates division and differentiation of sympathetic and embryonic sensory neurons as well as basal forebrain cholinergic neurons in the brain. Its relevance in the snake venom is not clear. However, it has been shown to inhibit metalloproteinase-dependent proteolysis of platelet glycoprotein Ib alpha, suggesting a metalloproteinase inhibition to prevent metalloprotease autodigestion and/or protection against prey proteases. Binds a lipid between the two protein chains in the homodimer. The lipid-bound form promotes histamine relase from mouse mast cells, contrary to the lipid-free form. In Notechis scutatus scutatus (Mainland tiger snake), this protein is Venom nerve growth factor 2.